The chain runs to 423 residues: 5-hydroxytryptamine receptor 1A-alpha (423 aa).

The Extracellular portion of the chain corresponds to 1-47; that stretch reads MDLRATSSNDSNATSGYSDTAAVDWDEGENATGSGSLPDPELSYQII. 3 N-linked (GlcNAc...) asparagine glycosylation sites follow: asparagine 9, asparagine 12, and asparagine 30. The chain crosses the membrane as a helical span at residues 48–68; sequence TSLFLGALILCSIFGNSCVVA. Residues 69 to 82 lie on the Cytoplasmic side of the membrane; sequence AIALERSLQNVANY. The helical transmembrane segment at 83–107 threads the bilayer; that stretch reads LIGSLAVTDLMVSVLVLPMAALYQV. Over 108–116 the chain is Extracellular; sequence LNKWTLGQD. The helical transmembrane segment at 117-141 threads the bilayer; it reads ICDLFIALDVLCCTSSILHLCAIAL. Cysteine 118 and cysteine 196 are disulfide-bonded. Positions 125 and 129 each coordinate serotonin. The DRY motif; important for ligand-induced conformation changes motif lies at 142–144; it reads DRY. Over 142–161 the chain is Cytoplasmic; sequence DRYWAITDPIDYVNKRTPRR. A helical membrane pass occupies residues 162–183; the sequence is AAVLISVTWLIGFSISIPPMLG. Topologically, residues 184-202 are extracellular; that stretch reads WRSAEDRANPDACIISQDP. Residues 203–225 form a helical membrane-spanning segment; sequence GYTIYSTFGAFYIPLILMLVLYG. Residues 226–347 lie on the Cytoplasmic side of the membrane; sequence RIFKAARFRI…LARERKTVKT (122 aa). Positions 311-332 are disordered; it reads LPLPNTPQSSSHENINEKTTGT. Polar residues predominate over residues 316–329; that stretch reads TPQSSSHENINEKT. 1D-myo-inositol 4-phosphate-binding residues include serine 320, lysine 346, threonine 347, and glycine 353. A helical transmembrane segment spans residues 348–371; it reads LGIIMGTFIFCWLPFFIVALVLPF. At 372–379 the chain is on the extracellular side; the sequence is CAENCYMP. The chain crosses the membrane as a helical span at residues 380-404; it reads EWLGAVINWLGYSNSLLNPIIYAYF. Positions 397–401 match the NPxxY motif; important for ligand-induced conformation changes and signaling motif; the sequence is NPIIY. 1D-myo-inositol 4-phosphate contacts are provided by phenylalanine 404, asparagine 405, and lysine 406. Topologically, residues 405–423 are cytoplasmic; sequence NKDFQSAFKKILRCKFHRH.

Belongs to the G-protein coupled receptor 1 family. 5-hydroxytryptamine receptor subfamily.

The protein resides in the cell membrane. G-protein coupled receptor activity is regulated by lipids: phosphatidylinositol 4-phosphate increases HTR1A-mediated activity. G-protein coupled receptor for 5-hydroxytryptamine (serotonin). Also functions as a receptor for various drugs and psychoactive substances. Ligand binding causes a conformation change that triggers signaling via guanine nucleotide-binding proteins (G proteins) and modulates the activity of downstream effectors, such as adenylate cyclase. HTR1A is coupled to G(i)/G(o) G alpha proteins and mediates inhibitory neurotransmission: signaling inhibits adenylate cyclase activity and activates a phosphatidylinositol-calcium second messenger system that regulates the release of Ca(2+) ions from intracellular stores. Beta-arrestin family members regulate signaling by mediating both receptor desensitization and resensitization processes. The chain is 5-hydroxytryptamine receptor 1A-alpha (htr1aa) from Takifugu rubripes (Japanese pufferfish).